The sequence spans 226 residues: V-type proton ATPase subunit E 1 (226 aa).

Alanine 2 is subject to N-acetylalanine. A Phosphotyrosine modification is found at tyrosine 56.

This sequence belongs to the V-ATPase E subunit family. As to quaternary structure, V-ATPase is a heteromultimeric enzyme made up of two complexes: the ATP-hydrolytic V1 complex and the proton translocation V0 complex. The V1 complex consists of three catalytic AB heterodimers that form a heterohexamer, three peripheral stalks each consisting of EG heterodimers, one central rotor including subunits D and F, and the regulatory subunits C and H. The proton translocation complex V0 consists of the proton transport subunit a, a ring of proteolipid subunits c9c'', rotary subunit d, subunits e and f, and the accessory subunits ATP6AP1/Ac45 and ATP6AP2/PRR. Interacts with RABL2/RABL2A; binds preferentially to GTP-bound RABL2. Interacts with ALDOC. Interacts with RAB11B. Expressed in brain (at protein level).

The protein resides in the apical cell membrane. It is found in the cytoplasmic vesicle. The protein localises to the secretory vesicle. Its subcellular location is the synaptic vesicle membrane. It localises to the clathrin-coated vesicle membrane. Its function is as follows. Subunit of the V1 complex of vacuolar(H+)-ATPase (V-ATPase), a multisubunit enzyme composed of a peripheral complex (V1) that hydrolyzes ATP and a membrane integral complex (V0) that translocates protons. V-ATPase is responsible for acidifying and maintaining the pH of intracellular compartments and in some cell types, is targeted to the plasma membrane, where it is responsible for acidifying the extracellular environment. This Rattus norvegicus (Rat) protein is V-type proton ATPase subunit E 1 (Atp6v1e1).